The sequence spans 90 residues: Small ribosomal subunit protein bS6 (90 aa).

K33 participates in a covalent cross-link: Isoglutamyl lysine isopeptide (Lys-Gln) (interchain with Q-Cter in protein Pup).

It belongs to the bacterial ribosomal protein bS6 family.

In terms of biological role, binds together with bS18 to 16S ribosomal RNA. This Mycolicibacterium smegmatis (strain ATCC 700084 / mc(2)155) (Mycobacterium smegmatis) protein is Small ribosomal subunit protein bS6 (rpsF).